The following is a 461-amino-acid chain: V-type ATP synthase beta chain (461 aa).

Belongs to the ATPase alpha/beta chains family.

In terms of biological role, produces ATP from ADP in the presence of a proton gradient across the membrane. The V-type beta chain is a regulatory subunit. In Clostridium botulinum (strain Langeland / NCTC 10281 / Type F), this protein is V-type ATP synthase beta chain.